The primary structure comprises 632 residues: Chaperone protein DnaK (632 aa).

Threonine 198 is modified (phosphothreonine; by autocatalysis). A disordered region spans residues 524-557 (RREAVDAKNHADSLVHSTEKALAEHGSKIEDSER).

Belongs to the heat shock protein 70 family.

In terms of biological role, acts as a chaperone. This chain is Chaperone protein DnaK, found in Nitrobacter hamburgensis (strain DSM 10229 / NCIMB 13809 / X14).